The chain runs to 285 residues: Secreted alkaline triacylglycerol lipase (285 aa).

A signal peptide spans 1–20 (MLFNYQSLLVGVSLISQALS). The active-site Nucleophile is serine 159. Catalysis depends on charge relay system residues aspartate 215 and histidine 268.

The protein belongs to the AB hydrolase superfamily. FaeA family.

Its subcellular location is the secreted. The enzyme catalyses a triacylglycerol + H2O = a diacylglycerol + a fatty acid + H(+). Secreted alkaline lipase that hydrolyzes acylglycerol lipids such as triacylglycerols and consequently releases free fatty acid. Is able to hydrolyze tributyrin (1,2,3-tributyryl-glycerin). This chain is Secreted alkaline triacylglycerol lipase, found in Penicillium cyclopium.